A 566-amino-acid chain; its full sequence is Liver carboxylesterase 1 (566 aa).

A signal peptide spans 1–18 (MWLRALVLATLAAFTAWG). A glycan (N-linked (GlcNAc...) asparagine) is linked at asparagine 79. Cysteine 87 and cysteine 116 are oxidised to a cystine. The active-site Acyl-ester intermediate is serine 221. Cysteine 274 and cysteine 285 are disulfide-bonded. Glutamate 354 acts as the Charge relay system in catalysis. Position 379 is a phosphoserine (serine 379). Histidine 467 acts as the Charge relay system in catalysis.

This sequence belongs to the type-B carboxylesterase/lipase family. In terms of assembly, homotrimer and homohexamer. Binds to beta-glucuronidase.

The protein localises to the endoplasmic reticulum lumen. It localises to the cytoplasm. It is found in the lipid droplet. It catalyses the reaction a carboxylic ester + H2O = an alcohol + a carboxylate + H(+). The enzyme catalyses cholesteryl (9Z-octadecenoate) + H2O = cholesterol + (9Z)-octadecenoate + H(+). It carries out the reaction 2-(5Z,8Z,11Z,14Z-eicosatetraenoyl)-glycerol + H2O = glycerol + (5Z,8Z,11Z,14Z)-eicosatetraenoate + H(+). The catalysed reaction is prostaglandin E2 1-glyceryl ester + H2O = prostaglandin E2 + glycerol + H(+). It catalyses the reaction a cholesterol ester + H2O = cholesterol + a fatty acid + H(+). The enzyme catalyses prostaglandin F2alpha 1-glyceryl ester + H2O = prostaglandin F2alpha + glycerol + H(+). Involved in the detoxification of xenobiotics and in the activation of ester and amide prodrugs. Hydrolyzes aromatic and aliphatic esters, but has no catalytic activity toward amides or a fatty acyl-CoA ester. Displays fatty acid ethyl ester synthase activity, catalyzing the ethyl esterification of oleic acid to ethyloleate. Converts monoacylglycerides to free fatty acids and glycerol. Hydrolyzes of 2-arachidonoylglycerol and prostaglandins. Hydrolyzes cellular cholesteryl esters to free cholesterols and promotes reverse cholesterol transport (RCT) by facilitating both the initial and final steps in the process. First of all, allows free cholesterol efflux from macrophages to extracellular cholesterol acceptors and secondly, releases free cholesterol from lipoprotein-delivered cholesteryl esters in the liver for bile acid synthesis or direct secretion into the bile. This Macaca fascicularis (Crab-eating macaque) protein is Liver carboxylesterase 1.